A 1723-amino-acid chain; its full sequence is Probable outer membrane protein pmp20 (1723 aa).

A signal peptide spans 1–21 (MKWLPATAVFAAVLPALTAFG). Disordered stretches follow at residues 78–100 (VTPD…SGAT) and 139–161 (LSSS…SASA). Composition is skewed to low complexity over residues 85 to 100 (SSSN…SGAT) and 140 to 161 (SSSS…SASA). The region spanning 1434 to 1723 (EDPAFNNFWA…MANGGIRFVF (290 aa)) is the Autotransporter domain.

Belongs to the PMP outer membrane protein family.

It is found in the secreted. Its subcellular location is the cell wall. It localises to the cell outer membrane. The protein is Probable outer membrane protein pmp20 (pmp20) of Chlamydia pneumoniae (Chlamydophila pneumoniae).